The sequence spans 138 residues: Transcription antitermination protein NusB (138 aa).

The protein belongs to the NusB family.

Functionally, involved in transcription antitermination. Required for transcription of ribosomal RNA (rRNA) genes. Binds specifically to the boxA antiterminator sequence of the ribosomal RNA (rrn) operons. This chain is Transcription antitermination protein NusB, found in Alkaliphilus oremlandii (strain OhILAs) (Clostridium oremlandii (strain OhILAs)).